The following is a 204-amino-acid chain: MNAQPLRVGIGGPVGSGKTALTLALCLALRERYNLAVVTNDIYTREDADFLVRNEALAPERIIGVETGGCPHTAIREDASINLEAVDQLNRRFPGLDLILVESGGDNLSATFSPELSDLTIYVIDVSAGDKLPRKGGPGICKSDLLVINKIDLAPLVGASLEMMNSDTQRMRGGKPFVFSNQKTGQGLADIIAFIERQGLLTAA.

Residue 12–19 participates in GTP binding; that stretch reads GPVGSGKT.

It belongs to the SIMIBI class G3E GTPase family. UreG subfamily. In terms of assembly, homodimer. UreD, UreF and UreG form a complex that acts as a GTP-hydrolysis-dependent molecular chaperone, activating the urease apoprotein by helping to assemble the nickel containing metallocenter of UreC. The UreE protein probably delivers the nickel.

The protein localises to the cytoplasm. Functionally, facilitates the functional incorporation of the urease nickel metallocenter. This process requires GTP hydrolysis, probably effectuated by UreG. This chain is Urease accessory protein UreG, found in Pseudomonas fluorescens (strain ATCC BAA-477 / NRRL B-23932 / Pf-5).